An 84-amino-acid chain; its full sequence is Small ribosomal subunit protein bS20 (84 aa).

Belongs to the bacterial ribosomal protein bS20 family.

Binds directly to 16S ribosomal RNA. The protein is Small ribosomal subunit protein bS20 of Lactiplantibacillus plantarum (strain ATCC BAA-793 / NCIMB 8826 / WCFS1) (Lactobacillus plantarum).